A 242-amino-acid polypeptide reads, in one-letter code: Large ribosomal subunit protein uL1 (242 aa).

The protein belongs to the universal ribosomal protein uL1 family. Part of the 50S ribosomal subunit.

In terms of biological role, binds directly to 23S rRNA. The L1 stalk is quite mobile in the ribosome, and is involved in E site tRNA release. Its function is as follows. Protein L1 is also a translational repressor protein, it controls the translation of the L11 operon by binding to its mRNA. This is Large ribosomal subunit protein uL1 from Dictyoglomus turgidum (strain DSM 6724 / Z-1310).